The following is a 248-amino-acid chain: Probable transcriptional regulatory protein FTF0655 (248 aa).

This sequence belongs to the TACO1 family.

The protein resides in the cytoplasm. The chain is Probable transcriptional regulatory protein FTF0655 from Francisella tularensis subsp. tularensis (strain FSC 198).